A 3459-amino-acid chain; its full sequence is MVIDNEEKKKKWEYATDEYKTCSNNIDEDILKDDKDVSYFEKVKSSDNVLKYDECSPLKEKDTSYKGEHIKRGQFCKNKNNIYSDDDNNNIYNDDDNNNIYNDDDNNIYSCNNSYVSTHFGNTKRSDDMNNAENKKKKNEKDLFYDKVDEILNRQSDNDDDWIFNEDDEKKNKNNDGNDNRYDYNDLQNNNNNDNNKYDYNFYDDEKKNKNNDGDDNKYDYNHLQNNNNNKYDYNFDDDEKKKSHTPFDFYQEERQNKAYFLNIHTLNFEAHMLHALLKKNKYRLTKYNTNMNNMIYKYLYLYKKKKSLKYKHLKEQSYNNYTKHKTYNYHHTNEKEKKKNTHVDKQKIYVDDNKGNVSPEQVIHNKIENMEKDDKGKFNKTDQTNKLLNIDYYNKNNKYGYITPDNDDGDDYNDDNDNDDNYNDDNYNDDNYNDDNYNDDNYNDEKKKKKNNLMDVHFLYMEYFIRKKKLTELTNIYNKYIYNKDNLLYLKKWYLKNVYILNSKGYDESNIRISDPKKIYEYNNINNNCSDIPGGENSDTSYYFSPPSIKTYCLNNYFICLLSKNNEIIVIGYKFINIHNLIFFKENNNIDDFFFKTEGPININFNYYKYPHYAVIKNDLWKNIKNIKNIHINDKNKLCVNTSNCVYVFEIFLSNSKVKYKYLYNYIEKGTFLNKENNISSSLHIKEKKLLYFTPYNIIYLNNNKNIFNSSITITKDIKFKYKILNTSFYKNNIYMVISYFNKITVFKNEAIYFVLQYDRNGDVVSEQEVNEKKKGENEMNKEVNKMNEEVNKMNEEVNKMNEEVNKMNKEVNKMDEEVNKMNKEVNKMNKESNEMNKEANEMNKDEENEKYENHNYNYENNICINTNGYDKKGEDEEKYNLKDDYISYIPFLGILENNHFCAAYGKTLTVFEYVSKVVIKYKYILNHSIYFFKSCDNNIIIIYDKYKLYVYQIMLKGDSNFCILLLYEKKMNNVTSRVISEGYNIYESYDGFIQVNKKNVKVNKNDKIANFMFSLFNQDIVLNEQNSKKDVSFFYINLIYIYVLNNDKVDIIVINSLIYMIYLFFTYKKYDLLLMFILHLYNGDVCVLSDFSLKEEEKKIQIQKLLFFFFETQMRDIIQNYKDYKEKQIHNNDYFIKYRGDQNEGRRQEKVLNNKDNNDKNDKNDKNDKNDKNDKNEKNEKNDYDKRSEYISYEYTPLRDITYTVSSLSSTLSCSLSGDEKKEEDSIMSLSKEDDRYHKYIIDDQDSYNLYRHYNNTNHYEYIKNKKEVILKDEEEDIYINNKIINKECIEELIHLCYLSIELSIKFNINLYEYTFHLFKIYNIENVYFYICEPYIINKKICLTHHSLIYNLVQYFKRFYSIFCLYDDTYYDLFLFFCTLLTSKGGDEIIKGHKGIIPTQGDKNETDEGNKNETDEGDKNETDEGDKNETDEGNKNETEEIYKNETDEGNKNETEEIYKNDNDDDNYDDDYYHHYGEHHHYDSIMNNGYLTKFIFLLKIQNKREHYELNYPHNHNTVPYKKKEKMDNMYHSNLMICEDKSKEYINEELITFDYYFINKYLNIKKNFKQIKKIYCFICIINKFCKFFENINLEKNLENIISLLPLHISSYLYNKHNEDKTTICEFFISYMIRKKNIFFFQFCIDNNIKNEMFPIYIPMYIFNNFYQTHFFLYYLYCVIFKKQFSIHMDTYVNEKRHMVYIKDMYVLKKKQKKKGNNQKQNHNYNDDINNKENNNNNNVPLHRICIDDSSYYDKVFFVYSPLLYEKEQNYGINKNIVTLIEYMCKRYDKKCLHIKEEKDILSGLFFKELNVIEGNYMPRFEENKNKNDKIKDDNYGNNDKRCGKKCVKKCEKKCEKKCEKKCEKKCEKKCEKKCEKKCEKKCEKKCEKKCEKKCEKKCEKKCEKKCNHYDLDEKKYDQHDLCDQKYDQHDLCDQKYDQHDLCDQKYDQTCNILNNNIYYKDETNLTMRFPLKVEKEHNNVPNMNNGSNIYKNVNTYNNFDNIKKIENITYEGANKLDMLKKGENINLFINKINCKSKMENILKEFNINDFFNLDKNGMFLLFQMSLSNCFYIMNNIFFFYHHNNNNMDRSSNYLINIFIENILEFYIHLNVTYVHYKNKLYFILQENVENLKDIYKHIIYKINTCVHYDEIRNFALKMKNFIIISSDIRSVQNNKMLTLIPWIIFQLFFIKNHMKKIIQCTTYMFLLFFIFSTDFLFDECINIYFIHLLMQFENKKYKKFNLAHRNNNNDNDNNDHTDRMRMRYYDDNNNNNDHTDRMRMRYYDDNNNNDHTDRMRMRYYDDNNNNDHTDRMRMRYYDHRHNNINISIFNYQLYKKQKEKFHKFLSTFNYQKDIYDNNFIKIFHLKKKNIFLKKKTILYNLEMFRNELDFNIITYIMKRLYSFDLSYLLNLFSTDSTYNHMESHNPETYVRSTNTKEDIQKNLYIPDKTNYSFKNICNVNYNNNNNNNNNNNNNEHAKNGSPNKDVYCNITNKINLLNKKKETKISIFKGGHKHVVNKKKKKKDIPLSNKRMEKKKNKINNICSINFCRNQLRYILLLYVKRLIMVLEGLKKNEHEKNDGRIYKDNINNADDNNDDDNINDDDNINDDDNINDDDNNNDDDNNNDDNNDDNNINNDNNDDDNNNNNNIYNNYYHNKKELILNIMKYILFFSCTKKYTNVCLLLFDYFGYYNVVIQYYKKYKLNDLYEYIYFKIYSFYKETRLKKRIYGYLFYTTLLKNITSLNNLFVHYILNNYFFFHSKSMYMLKKRKKKKIQKGRIWKREENGEKKKNEKNESEKNERNEKNEKNEKHEKHEKHEKNEKNGSVNMIKCKDKGDKNDEHNIERFGKKQMKEFMVMSYPERTIQYKEENILSFKNDILYNKDVCNNINKYNNKKYCKNLSLYHVKNYFFHISLYFIKSLLCSRNNFNDLIKMRIYFLLLYKIKFVRKIKSYLFKKHFVKYIDLLCKYNKDKVYKCVKSINCETYISIYEKHHNINVILYIYEKQGKFFKVIQICLKEIKNNISKLYNILKKFFKNNNNNNKKKKNKKKNIYIKSFFFSTKVTYDDMFCINFDHHVDIYNFYKIPLKKKITKCLFCSCKEKTQQIVKDKNLFIQKMFGDLNYISKERSFFLECFVINKRRRGMATCVRSEDIPNVMDIKKGHDHMSINKSTNEYLNKRKNQENYHNLQNTYCNLHSCYEKGIHWSNRYGKYNNCENIKGHKKRLIKSRWLFIIKEYNNIFLYIYMLSFILKKNKITNNKINEYIISYILNQCINGYINIHEKVINSTLNKKKKKKKLLFFFNYIFEQIILFVININSYNHTQNVCQKILSQYKQKFDIKLIKMPIIQVLKNLCDTYMFFNDTNEIAQKNIKESMKYYSYQKKKGLIINFEQSNHKHKFNMNLDKKSYVLSLNKQNLNHTITKSYFSQPSNIIYIYKCDHSNHFACTNLCYVCDYESAQEI.

The span at 158–167 (NDDDWIFNED) shows a compositional bias: acidic residues. Disordered regions lie at residues 158 to 230 (NDDD…NNNN) and 400 to 447 (YGYI…NDEK). A compositionally biased stretch (basic and acidic residues) spans 168 to 184 (DEKKNKNNDGNDNRYDY). A compositionally biased stretch (low complexity) spans 185–201 (NDLQNNNNNDNNKYDYN). Basic and acidic residues predominate over residues 204 to 221 (DDEKKNKNNDGDDNKYDY). Over residues 406–443 (DNDDGDDYNDDNDNDDNYNDDNYNDDNYNDDNYNDDNY) the composition is skewed to acidic residues. Residues 771–851 (VNEKKKGENE…NEMNKDEENE (81 aa)) are a coiled coil. Residues 1059–1079 (LIYMIYLFFTYKKYDLLLMFI) form a helical membrane-spanning segment. Disordered stretches follow at residues 1148 to 1187 (RRQE…NDYD), 1399 to 1467 (IPTQ…NDDD), and 1711 to 1733 (QKKK…NKEN). Over residues 1404 to 1463 (DKNETDEGNKNETDEGDKNETDEGDKNETDEGNKNETEEIYKNETDEGNKNETEEIYKND) the composition is skewed to basic and acidic residues. 2 helical membrane passes run 2059–2079 (FLLF…IFFF) and 2197–2217 (IIQC…DFLF). Disordered regions lie at residues 2582–2644 (IYKD…DNNN) and 2776–2835 (GRIW…DKGD). A compositionally biased stretch (acidic residues) spans 2592–2629 (DNNDDDNINDDDNINDDDNINDDDNNNDDDNNNDDNND). Residues 2779–2821 (WKREENGEKKKNEKNESEKNERNEKNEKNEKHEKHEKHEKNEK) are compositionally biased toward basic and acidic residues. Residues 2785-2820 (GEKKKNEKNESEKNERNEKNEKNEKHEKHEKHEKNE) are a coiled coil. Transmembrane regions (helical) follow at residues 3229 to 3249 (LFII…SFIL) and 3296 to 3316 (LLFF…NINS).

It localises to the membrane. This is an uncharacterized protein from Plasmodium falciparum (isolate 3D7).